The following is a 132-amino-acid chain: Protein NrdI (132 aa).

This sequence belongs to the NrdI family.

Its function is as follows. Probably involved in ribonucleotide reductase function. This chain is Protein NrdI, found in Staphylococcus aureus (strain Mu3 / ATCC 700698).